A 125-amino-acid chain; its full sequence is E4-ORF1 (125 aa).

The PDZ-binding motif lies at 122–125 (ATLV).

Belongs to the dUTPase family. As to quaternary structure, binds to human MPDZ.

The protein localises to the host cytoplasm. The enzyme catalyses dUTP + H2O = dUMP + diphosphate + H(+). Plays a key role in virus oncogenecity in animals. Binds and sequesters human MUPP1/MPDZ protein in the cytoplasm, preventing it from playing a role in cellular proliferation regulation. Induces cell transformation, probably by inactivating MPDZ protein. The polypeptide is E4-ORF1 (E4) (Homo sapiens (Human)).